The primary structure comprises 162 residues: Protein NrdI (162 aa).

Belongs to the NrdI family.

Functionally, probably involved in ribonucleotide reductase function. The polypeptide is Protein NrdI (Streptococcus pyogenes serotype M28 (strain MGAS6180)).